A 360-amino-acid chain; its full sequence is UDP-N-acetylglucosamine--N-acetylmuramyl-(pentapeptide) pyrophosphoryl-undecaprenol N-acetylglucosamine transferase (360 aa).

UDP-N-acetyl-alpha-D-glucosamine is bound by residues 12–14 (TGG), Asn-124, Arg-161, Ser-189, Ile-243, and Gln-288.

This sequence belongs to the glycosyltransferase 28 family. MurG subfamily.

Its subcellular location is the cell inner membrane. The catalysed reaction is di-trans,octa-cis-undecaprenyl diphospho-N-acetyl-alpha-D-muramoyl-L-alanyl-D-glutamyl-meso-2,6-diaminopimeloyl-D-alanyl-D-alanine + UDP-N-acetyl-alpha-D-glucosamine = di-trans,octa-cis-undecaprenyl diphospho-[N-acetyl-alpha-D-glucosaminyl-(1-&gt;4)]-N-acetyl-alpha-D-muramoyl-L-alanyl-D-glutamyl-meso-2,6-diaminopimeloyl-D-alanyl-D-alanine + UDP + H(+). The protein operates within cell wall biogenesis; peptidoglycan biosynthesis. In terms of biological role, cell wall formation. Catalyzes the transfer of a GlcNAc subunit on undecaprenyl-pyrophosphoryl-MurNAc-pentapeptide (lipid intermediate I) to form undecaprenyl-pyrophosphoryl-MurNAc-(pentapeptide)GlcNAc (lipid intermediate II). This Acidithiobacillus ferrooxidans (strain ATCC 23270 / DSM 14882 / CIP 104768 / NCIMB 8455) (Ferrobacillus ferrooxidans (strain ATCC 23270)) protein is UDP-N-acetylglucosamine--N-acetylmuramyl-(pentapeptide) pyrophosphoryl-undecaprenol N-acetylglucosamine transferase.